We begin with the raw amino-acid sequence, 106 residues long: Large ribosomal subunit protein P1A (106 aa).

Ser2 is modified (N-acetylserine). The interval 73-106 (GGVAGGEAGEAEAEKEEEEAKEESDDDMGFGLFD) is disordered. The span at 81 to 100 (GEAEAEKEEEEAKEESDDDM) shows a compositional bias: acidic residues. Ser96 carries the phosphoserine modification.

Belongs to the eukaryotic ribosomal protein P1/P2 family. In terms of assembly, component of the large ribosomal subunit (LSU). Mature yeast ribosomes consist of a small (40S) and a large (60S) subunit. The 40S small subunit contains 1 molecule of ribosomal RNA (18S rRNA) and 33 different proteins (encoded by 57 genes). The large 60S subunit contains 3 rRNA molecules (25S, 5.8S and 5S rRNA) and 46 different proteins (encoded by 81 genes). The 5 acidic ribosomal P-proteins form the stalk structure of the 60S subunit. They are organized as a pentameric complex in which uL10/P0 interacts with 2 heterodimers, P1A-P2B and P1B-P2A. N-terminally acetylated by acetyltransferase NatA.

Its subcellular location is the cytoplasm. Component of the ribosome, a large ribonucleoprotein complex responsible for the synthesis of proteins in the cell. The small ribosomal subunit (SSU) binds messenger RNAs (mRNAs) and translates the encoded message by selecting cognate aminoacyl-transfer RNA (tRNA) molecules. The large subunit (LSU) contains the ribosomal catalytic site termed the peptidyl transferase center (PTC), which catalyzes the formation of peptide bonds, thereby polymerizing the amino acids delivered by tRNAs into a polypeptide chain. The nascent polypeptides leave the ribosome through a tunnel in the LSU and interact with protein factors that function in enzymatic processing, targeting, and the membrane insertion of nascent chains at the exit of the ribosomal tunnel. This is Large ribosomal subunit protein P1A from Saccharomyces cerevisiae (strain ATCC 204508 / S288c) (Baker's yeast).